The primary structure comprises 368 residues: Chaperone protein DnaJ (368 aa).

The J domain maps to 5–69; it reads DYYEVLGLDK…QKRAQYDRFG (65 aa). The CR-type zinc-finger motif lies at 126–208; it reads GKTETIELEI…CHGSGHVKKK (83 aa). C139, C142, C156, C159, C182, C185, C196, and C199 together coordinate Zn(2+). CXXCXGXG motif repeat units lie at residues 139 to 146, 156 to 163, 182 to 189, and 196 to 203; these read CDTCMGSG, CNRCGGSG, CSQCHGSG, and CPTCHGSG.

Belongs to the DnaJ family. In terms of assembly, homodimer. Requires Zn(2+) as cofactor.

It localises to the cytoplasm. Its function is as follows. Participates actively in the response to hyperosmotic and heat shock by preventing the aggregation of stress-denatured proteins and by disaggregating proteins, also in an autonomous, DnaK-independent fashion. Unfolded proteins bind initially to DnaJ; upon interaction with the DnaJ-bound protein, DnaK hydrolyzes its bound ATP, resulting in the formation of a stable complex. GrpE releases ADP from DnaK; ATP binding to DnaK triggers the release of the substrate protein, thus completing the reaction cycle. Several rounds of ATP-dependent interactions between DnaJ, DnaK and GrpE are required for fully efficient folding. Also involved, together with DnaK and GrpE, in the DNA replication of plasmids through activation of initiation proteins. This chain is Chaperone protein DnaJ, found in Exiguobacterium sp. (strain ATCC BAA-1283 / AT1b).